The sequence spans 629 residues: Aspartate--tRNA(Asp/Asn) ligase (629 aa).

The interval 1-24 is disordered; it reads MERSSRADLISEDSHPARTHTCGD. Residues 12 to 24 show a composition bias toward basic and acidic residues; the sequence is EDSHPARTHTCGD. Glu-194 lines the L-aspartate pocket. The segment at 218-221 is aspartate; the sequence is QTYK. Arg-240 is an L-aspartate binding site. ATP contacts are provided by residues 240-242 and Gln-249; that span reads RDE. Residue His-474 coordinates L-aspartate. Glu-508 serves as a coordination point for ATP. Arg-515 serves as a coordination point for L-aspartate. 560–563 provides a ligand contact to ATP; that stretch reads GLDR.

This sequence belongs to the class-II aminoacyl-tRNA synthetase family. Type 1 subfamily. In terms of assembly, homodimer.

It is found in the cytoplasm. The enzyme catalyses tRNA(Asx) + L-aspartate + ATP = L-aspartyl-tRNA(Asx) + AMP + diphosphate. Its function is as follows. Aspartyl-tRNA synthetase with relaxed tRNA specificity since it is able to aspartylate not only its cognate tRNA(Asp) but also tRNA(Asn). Reaction proceeds in two steps: L-aspartate is first activated by ATP to form Asp-AMP and then transferred to the acceptor end of tRNA(Asp/Asn). The sequence is that of Aspartate--tRNA(Asp/Asn) ligase from Salinibacter ruber (strain DSM 13855 / M31).